A 98-amino-acid chain; its full sequence is Large ribosomal subunit protein uL23 (98 aa).

The protein belongs to the universal ribosomal protein uL23 family. As to quaternary structure, part of the 50S ribosomal subunit. Contacts protein L29, and trigger factor when it is bound to the ribosome.

Its function is as follows. One of the early assembly proteins it binds 23S rRNA. One of the proteins that surrounds the polypeptide exit tunnel on the outside of the ribosome. Forms the main docking site for trigger factor binding to the ribosome. The polypeptide is Large ribosomal subunit protein uL23 (Thioalkalivibrio sulfidiphilus (strain HL-EbGR7)).